The chain runs to 92 residues: DNA/RNA-binding protein Alba (92 aa).

Lysine 11 carries the N6-acetyllysine modification.

It belongs to the histone-like Alba family. Acetylated. Acetylation at Lys-11 decreases DNA-binding affinity.

The protein resides in the cytoplasm. It localises to the chromosome. Binds double-stranded DNA tightly but without sequence specificity. Involved in DNA compaction. This is DNA/RNA-binding protein Alba from Pyrobaculum aerophilum (strain ATCC 51768 / DSM 7523 / JCM 9630 / CIP 104966 / NBRC 100827 / IM2).